Reading from the N-terminus, the 208-residue chain is Probable GTP-binding protein EngB (208 aa).

The 183-residue stretch at 23 to 205 folds into the EngB-type G domain; the sequence is LTSEMVILGR…RQTLLKYLLT (183 aa). GTP-binding positions include 31-38, 57-61, 84-87, 154-157, and 182-184; these read GRSNVGKS, GKTRL, DLPG, TKFD, and FNA. Mg(2+) is bound by residues Ser-38 and Thr-59.

Belongs to the TRAFAC class TrmE-Era-EngA-EngB-Septin-like GTPase superfamily. EngB GTPase family. It depends on Mg(2+) as a cofactor.

In terms of biological role, necessary for normal cell division and for the maintenance of normal septation. The polypeptide is Probable GTP-binding protein EngB (Helicobacter pylori (strain J99 / ATCC 700824) (Campylobacter pylori J99)).